A 471-amino-acid polypeptide reads, in one-letter code: uncharacterized protein (471 aa).

The next 12 helical transmembrane spans lie at 48–68 (FISA…FTIV), 85–105 (LSGV…YPML), 123–140 (YTMS…YALA), 145–165 (SVAL…MFLY), 186–206 (VVNS…GGLM), 223–243 (SGNW…FACF), 277–297 (FVGC…YFLL), 320–340 (GNFL…FSYL), 349–369 (IILL…TIHY), 379–399 (FIIY…SVSL), 414–434 (VAVQ…GGAF), and 440–460 (VVFF…LLII).

It belongs to the major facilitator superfamily.

Its subcellular location is the golgi apparatus. It localises to the membrane. This is an uncharacterized protein from Schizosaccharomyces pombe (strain 972 / ATCC 24843) (Fission yeast).